We begin with the raw amino-acid sequence, 366 residues long: Aminomethyltransferase (366 aa).

Belongs to the GcvT family. The glycine cleavage system is composed of four proteins: P, T, L and H.

The enzyme catalyses N(6)-[(R)-S(8)-aminomethyldihydrolipoyl]-L-lysyl-[protein] + (6S)-5,6,7,8-tetrahydrofolate = N(6)-[(R)-dihydrolipoyl]-L-lysyl-[protein] + (6R)-5,10-methylene-5,6,7,8-tetrahydrofolate + NH4(+). In terms of biological role, the glycine cleavage system catalyzes the degradation of glycine. The sequence is that of Aminomethyltransferase from Bordetella pertussis (strain Tohama I / ATCC BAA-589 / NCTC 13251).